The chain runs to 318 residues: GTP cyclohydrolase MptA (318 aa).

This sequence belongs to the GTP cyclohydrolase IV family. In terms of assembly, homodimer. Fe(2+) is required as a cofactor.

It carries out the reaction GTP + H2O = 7,8-dihydroneopterin 2',3'-cyclic phosphate + formate + diphosphate + H(+). It participates in cofactor biosynthesis; 5,6,7,8-tetrahydromethanopterin biosynthesis. Its function is as follows. Converts GTP to 7,8-dihydro-D-neopterin 2',3'-cyclic phosphate, the first intermediate in the biosynthesis of coenzyme methanopterin. The sequence is that of GTP cyclohydrolase MptA from Methanothermobacter thermautotrophicus (strain ATCC 29096 / DSM 1053 / JCM 10044 / NBRC 100330 / Delta H) (Methanobacterium thermoautotrophicum).